The chain runs to 425 residues: MTRLDSVERAVADIAAGKAVIVIDDEDRENEGDLIFAAEKATPEMVAFMVRYTSGYLCVPLDGAICDRLGLLPMYAVNQDKHGTAYTVTVDARNGIGTGISASDRATTMRLLADPTSVADDFTRPGHVVPLRAKDGGVLRRPGHTEAAVDLARMAGLQPAGAICEIVSQKDEGSMAHTDELRVFADEHGLALITIADLIEWRRKHEKHIERVAEARIPTRHGEFRAIGYTSIYEDVEHVALVRGEIAGPNADGDDVLVRVHSECLTGDVFGSRRCDCGPQLDAALAMVAREGRGVVLYMRGHEGRGIGLMHKLQAYQLQDAGADTVDANLKLGLPADARDYGIGAQILVDLGVRSMRLLTNNPAKRVGLDGYGLHIIERVPLPVRANAENIRYLMTKRDKLGHDLAGLDDFHESVHLPGEFGGAL.

The DHBP synthase stretch occupies residues 1–204 (MTRLDSVERA…IADLIEWRRK (204 aa)). Residues 28–29 (RE), Asp-33, 141–145 (RPGHT), and Glu-165 each bind D-ribulose 5-phosphate. Glu-29 provides a ligand contact to Mg(2+). Residue His-144 coordinates Mg(2+). Residues 205–425 (HEKHIERVAE…HLPGEFGGAL (221 aa)) are GTP cyclohydrolase II. A GTP-binding site is contributed by 259–263 (RVHSE). The Zn(2+) site is built by Cys-264, Cys-275, and Cys-277. GTP contacts are provided by residues Gln-280, 303–305 (EGR), and Thr-325. The active-site Proton acceptor; for GTP cyclohydrolase activity is the Asp-337. Arg-339 serves as the catalytic Nucleophile; for GTP cyclohydrolase activity. 2 residues coordinate GTP: Thr-360 and Lys-365.

In the N-terminal section; belongs to the DHBP synthase family. It in the C-terminal section; belongs to the GTP cyclohydrolase II family. The cofactor is Mg(2+). Requires Mn(2+) as cofactor. It depends on Zn(2+) as a cofactor.

The enzyme catalyses D-ribulose 5-phosphate = (2S)-2-hydroxy-3-oxobutyl phosphate + formate + H(+). It catalyses the reaction GTP + 4 H2O = 2,5-diamino-6-hydroxy-4-(5-phosphoribosylamino)-pyrimidine + formate + 2 phosphate + 3 H(+). It functions in the pathway cofactor biosynthesis; riboflavin biosynthesis; 2-hydroxy-3-oxobutyl phosphate from D-ribulose 5-phosphate: step 1/1. The protein operates within cofactor biosynthesis; riboflavin biosynthesis; 5-amino-6-(D-ribitylamino)uracil from GTP: step 1/4. In terms of biological role, catalyzes the conversion of D-ribulose 5-phosphate to formate and 3,4-dihydroxy-2-butanone 4-phosphate. Functionally, catalyzes the conversion of GTP to 2,5-diamino-6-ribosylamino-4(3H)-pyrimidinone 5'-phosphate (DARP), formate and pyrophosphate. This is Riboflavin biosynthesis protein RibBA from Mycobacterium bovis (strain ATCC BAA-935 / AF2122/97).